The following is a 393-amino-acid chain: S-adenosylmethionine synthase (393 aa).

H17 contributes to the ATP binding site. D19 lines the Mg(2+) pocket. E45 serves as a coordination point for K(+). Residues E58 and Q104 each contribute to the L-methionine site. The segment at 104–114 (QSAEIAQGVEE) is flexible loop. Residues 171–173 (DAK), D245, 251–252 (RK), A268, and K272 each bind ATP. D245 serves as a coordination point for L-methionine. K276 serves as a coordination point for L-methionine.

It belongs to the AdoMet synthase family. As to quaternary structure, homotetramer; dimer of dimers. Mg(2+) serves as cofactor. The cofactor is K(+).

The protein localises to the cytoplasm. It carries out the reaction L-methionine + ATP + H2O = S-adenosyl-L-methionine + phosphate + diphosphate. It participates in amino-acid biosynthesis; S-adenosyl-L-methionine biosynthesis; S-adenosyl-L-methionine from L-methionine: step 1/1. In terms of biological role, catalyzes the formation of S-adenosylmethionine (AdoMet) from methionine and ATP. The overall synthetic reaction is composed of two sequential steps, AdoMet formation and the subsequent tripolyphosphate hydrolysis which occurs prior to release of AdoMet from the enzyme. In Hyphomonas neptunium (strain ATCC 15444), this protein is S-adenosylmethionine synthase.